We begin with the raw amino-acid sequence, 309 residues long: Olfactory receptor 5B21 (309 aa).

At methionine 1–leucine 26 the chain is on the extracellular side. Residue asparagine 3 is glycosylated (N-linked (GlcNAc...) asparagine). A helical transmembrane segment spans residues leucine 27–isoleucine 47. Residues histidine 48 to threonine 55 lie on the Cytoplasmic side of the membrane. The helical transmembrane segment at proline 56–alanine 76 threads the bilayer. The Extracellular segment spans residues proline 77–cysteine 95. Cysteine 95 and cysteine 177 are oxidised to a cystine. A helical transmembrane segment spans residues alanine 96–methionine 116. Residues alanine 117–glycine 137 lie on the Cytoplasmic side of the membrane. Residues valine 138–alanine 158 form a helical membrane-spanning segment. The Extracellular portion of the chain corresponds to alanine 159–valine 199. The helical transmembrane segment at alanine 200 to isoleucine 220 threads the bilayer. Residues threonine 221–phenylalanine 235 lie on the Cytoplasmic side of the membrane. A helical membrane pass occupies residues serine 236–tyrosine 256. Topologically, residues leucine 257–isoleucine 270 are extracellular. N-linked (GlcNAc...) asparagine glycosylation occurs at asparagine 260. A helical membrane pass occupies residues alanine 271–asparagine 291. Residues lysine 292–tyrosine 309 lie on the Cytoplasmic side of the membrane.

It belongs to the G-protein coupled receptor 1 family.

The protein localises to the cell membrane. Odorant receptor. The protein is Olfactory receptor 5B21 of Homo sapiens (Human).